Reading from the N-terminus, the 246-residue chain is tRNA (guanine-N(1)-)-methyltransferase (246 aa).

Residues Gly-113 and Ile-133 to Leu-138 contribute to the S-adenosyl-L-methionine site.

The protein belongs to the RNA methyltransferase TrmD family. In terms of assembly, homodimer.

It localises to the cytoplasm. The enzyme catalyses guanosine(37) in tRNA + S-adenosyl-L-methionine = N(1)-methylguanosine(37) in tRNA + S-adenosyl-L-homocysteine + H(+). Its function is as follows. Specifically methylates guanosine-37 in various tRNAs. This is tRNA (guanine-N(1)-)-methyltransferase from Yersinia enterocolitica serotype O:8 / biotype 1B (strain NCTC 13174 / 8081).